We begin with the raw amino-acid sequence, 303 residues long: Succinate--CoA ligase [ADP-forming] subunit alpha (303 aa).

CoA contacts are provided by residues 20-23, Lys-46, and 108-110; these read TGSE and ITE. Tyr-173 contacts substrate. The active-site Tele-phosphohistidine intermediate is the His-259.

This sequence belongs to the succinate/malate CoA ligase alpha subunit family. In terms of assembly, heterotetramer of two alpha and two beta subunits.

The enzyme catalyses succinate + ATP + CoA = succinyl-CoA + ADP + phosphate. It carries out the reaction GTP + succinate + CoA = succinyl-CoA + GDP + phosphate. The protein operates within carbohydrate metabolism; tricarboxylic acid cycle; succinate from succinyl-CoA (ligase route): step 1/1. In terms of biological role, succinyl-CoA synthetase functions in the citric acid cycle (TCA), coupling the hydrolysis of succinyl-CoA to the synthesis of either ATP or GTP and thus represents the only step of substrate-level phosphorylation in the TCA. The alpha subunit of the enzyme binds the substrates coenzyme A and phosphate, while succinate binding and nucleotide specificity is provided by the beta subunit. The protein is Succinate--CoA ligase [ADP-forming] subunit alpha of Mycobacterium tuberculosis (strain CDC 1551 / Oshkosh).